The chain runs to 119 residues: Integration host factor subunit beta (119 aa).

Positions 93-119 (AGGLADTQPDGDAPDQPQPTLLGLHAM) are disordered. Low complexity predominate over residues 97-112 (ADTQPDGDAPDQPQPT).

It belongs to the bacterial histone-like protein family. As to quaternary structure, heterodimer of an alpha and a beta chain.

Its function is as follows. This protein is one of the two subunits of integration host factor, a specific DNA-binding protein that functions in genetic recombination as well as in transcriptional and translational control. This is Integration host factor subunit beta from Bordetella petrii (strain ATCC BAA-461 / DSM 12804 / CCUG 43448).